Reading from the N-terminus, the 271-residue chain is Calretinin (271 aa).

6 consecutive EF-hand domains span residues 16–51 (LTASQFLEIWKHFDADGNGYIEGKELENFFQELEKA), 63–98 (NFGEKMKEFMQKYDKNSDGKIEMAELAQILPTEENF), 107–142 (GSSAEFMEAWRKYDTDRSGYIEANELKGFLSDLLKK), 151–186 (KLQEYTQTILRMFDLNGDGKLGLSEMSRLLPVQENF), 195–230 (LTSEEFNAIFTFYDKDGSGYIDENELDALLKDLYEK), and 235–270 (MNIQQLTTYRKSVMSLAEAGKLYRKDLEIVLCSEPP). Ca(2+) contacts are provided by aspartate 29, aspartate 31, asparagine 33, tyrosine 35, glutamate 40, aspartate 76, asparagine 78, aspartate 80, lysine 82, glutamate 87, aspartate 120, aspartate 122, serine 124, tyrosine 126, glutamate 131, aspartate 164, asparagine 166, aspartate 168, lysine 170, glutamate 175, aspartate 208, aspartate 210, serine 212, tyrosine 214, and glutamate 219. At tyrosine 214 the chain carries Phosphotyrosine.

The protein belongs to the calbindin family.

Its subcellular location is the synapse. It localises to the cell projection. The protein resides in the dendrite. In terms of biological role, calcium-binding protein involved in calcium homeostasis and signal transduction. It plays a critical role in buffering intracellular calcium levels and modulating calcium-dependent signaling pathways. Predominantly expressed in specific neuronal populations, influences synaptic plasticity and neuronal excitability, contributing to learning and memory. During embryonic development, it facilitates neuronal differentiation and maturation. In Rattus norvegicus (Rat), this protein is Calretinin (Calb2).